The chain runs to 55 residues: ATP synthase F(0) complex subunit 8 (55 aa).

Residues 7-24 (APWFSIMIMTWLTLALLI) form a helical membrane-spanning segment. Positions 34-55 (TNPPSSKPSLTTKPTPWAWPWT) are disordered.

Belongs to the ATPase protein 8 family. Component of the ATP synthase complex composed at least of ATP5F1A/subunit alpha, ATP5F1B/subunit beta, ATP5MC1/subunit c (homooctomer), MT-ATP6/subunit a, MT-ATP8/subunit 8, ATP5ME/subunit e, ATP5MF/subunit f, ATP5MG/subunit g, ATP5MK/subunit k, ATP5MJ/subunit j, ATP5F1C/subunit gamma, ATP5F1D/subunit delta, ATP5F1E/subunit epsilon, ATP5PF/subunit F6, ATP5PB/subunit b, ATP5PD/subunit d, ATP5PO/subunit OSCP. ATP synthase complex consists of a soluble F(1) head domain (subunits alpha(3) and beta(3)) - the catalytic core - and a membrane F(0) domain - the membrane proton channel (subunits c, a, 8, e, f, g, k and j). These two domains are linked by a central stalk (subunits gamma, delta, and epsilon) rotating inside the F1 region and a stationary peripheral stalk (subunits F6, b, d, and OSCP).

The protein resides in the mitochondrion membrane. Subunit 8, of the mitochondrial membrane ATP synthase complex (F(1)F(0) ATP synthase or Complex V) that produces ATP from ADP in the presence of a proton gradient across the membrane which is generated by electron transport complexes of the respiratory chain. ATP synthase complex consist of a soluble F(1) head domain - the catalytic core - and a membrane F(1) domain - the membrane proton channel. These two domains are linked by a central stalk rotating inside the F(1) region and a stationary peripheral stalk. During catalysis, ATP synthesis in the catalytic domain of F(1) is coupled via a rotary mechanism of the central stalk subunits to proton translocation. In vivo, can only synthesize ATP although its ATP hydrolase activity can be activated artificially in vitro. Part of the complex F(0) domain. The polypeptide is ATP synthase F(0) complex subunit 8 (Aythya americana (Redhead)).